Consider the following 326-residue polypeptide: MTGLCGYSAPDMRGLRLIMIPVELLLCYLLLHPVDATSYGKQTNVLMHFPLSLESQTPSSDPLSCQFLHPKSLPGFSHMAPLPKFLVSLALRNALEEAGCQADVWALQLQLYRQGGVNATQVLIQHLRGLQKGRSTERNVSVEALASALQLLAREQQSTGRVGRSLPTEDCENEKEQAVHNVVQLLPGVGTFYNLGTALYYATQNCLGKARERGRDGAIDLGYDLLMTMAGMSGGPMGLAISAALKPALRSGVQQLIQYYQDQKDANISQPETTKEGLRAISDVSDLEETTTLASFISEVVSSAPYWGWAIIKSYDLDPGAGSLEI.

An N-terminal signal peptide occupies residues 1-35 (MTGLCGYSAPDMRGLRLIMIPVELLLCYLLLHPVD). Positions 36–164 (ATSYGKQTNV…EQQSTGRVGR (129 aa)) are excised as a propeptide. N-linked (GlcNAc...) asparagine glycosylation is present at Asn-118. Residue Thr-274 is glycosylated (O-linked (GalNAc...) threonine). The residue at position 323 (Ser-323) is a Phosphoserine.

This sequence belongs to the apolipoprotein F family. In terms of processing, O-glycosylated with core 1 or possibly core 8 glycans. Expressed by the liver and secreted in plasma.

Its subcellular location is the secreted. Functionally, minor apolipoprotein that associates with LDL. Inhibits cholesteryl ester transfer protein (CETP) activity and appears to be an important regulator of cholesterol transport. Also associates to a lesser degree with VLDL, Apo-AI and Apo-AII. The sequence is that of Apolipoprotein F (APOF) from Homo sapiens (Human).